A 328-amino-acid chain; its full sequence is Small neutral protease regulatory protein (328 aa).

Residues M1–T60 form the HTH lysR-type domain. Residues L20–T39 constitute a DNA-binding region (H-T-H motif).

The protein belongs to the LysR transcriptional regulatory family.

Transcriptional trans-activator of the gene (mprA) for the small neutral protease. The chain is Small neutral protease regulatory protein (mprR) from Streptomyces coelicolor (strain ATCC BAA-471 / A3(2) / M145).